The chain runs to 271 residues: DNA-directed RNA polymerase subunit Rpo3 (271 aa).

It belongs to the archaeal Rpo3/eukaryotic RPB3 RNA polymerase subunit family. As to quaternary structure, part of the RNA polymerase complex.

The protein resides in the cytoplasm. It carries out the reaction RNA(n) + a ribonucleoside 5'-triphosphate = RNA(n+1) + diphosphate. Its function is as follows. DNA-dependent RNA polymerase (RNAP) catalyzes the transcription of DNA into RNA using the four ribonucleoside triphosphates as substrates. The chain is DNA-directed RNA polymerase subunit Rpo3 from Thermoplasma volcanium (strain ATCC 51530 / DSM 4299 / JCM 9571 / NBRC 15438 / GSS1).